The following is a 270-amino-acid chain: tRNA pseudouridine synthase A (270 aa).

Asp52 functions as the Nucleophile in the catalytic mechanism. Tyr110 contacts substrate.

This sequence belongs to the tRNA pseudouridine synthase TruA family. Homodimer.

The catalysed reaction is uridine(38/39/40) in tRNA = pseudouridine(38/39/40) in tRNA. Its function is as follows. Formation of pseudouridine at positions 38, 39 and 40 in the anticodon stem and loop of transfer RNAs. This chain is tRNA pseudouridine synthase A, found in Paraburkholderia xenovorans (strain LB400).